A 216-amino-acid polypeptide reads, in one-letter code: UPF0502 protein Spea_2482 (216 aa).

The protein belongs to the UPF0502 family.

The sequence is that of UPF0502 protein Spea_2482 from Shewanella pealeana (strain ATCC 700345 / ANG-SQ1).